We begin with the raw amino-acid sequence, 244 residues long: MAIKGPRKHLKRLAAPANWQLPRKERTFTVRPSPGPHSMDKSLPLLLIVRDTLKCADNAREAKKIIQMGKILIDGVKRKEYKHPVGLMDVLSIPELNENYLVLFDENGRISLKKTEKTGVKLCKIVNKTVIKGGHIQLNLHDGRNQIVKVANALKAEEDIYKTGDSVLVSLPEQAVVGHVEFNEGKLAYITGGKHVGEFAKVVEVEKRTLYSDIVTLENKDGEKFKTIKPYVFIVGQDEPVISM.

Residues 43–106 (LPLLLIVRDT…NENYLVLFDE (64 aa)) form the S4 RNA-binding domain.

The protein belongs to the eukaryotic ribosomal protein eS4 family.

This chain is Small ribosomal subunit protein eS4 (rps4e), found in Methanococcus vannielii.